We begin with the raw amino-acid sequence, 431 residues long: Enolase (431 aa).

Glutamine 166 contacts (2R)-2-phosphoglycerate. Catalysis depends on glutamate 208, which acts as the Proton donor. The Mg(2+) site is built by aspartate 245, glutamate 288, and aspartate 315. The (2R)-2-phosphoglycerate site is built by lysine 340, arginine 369, serine 370, and lysine 391. The active-site Proton acceptor is the lysine 340.

This sequence belongs to the enolase family. Requires Mg(2+) as cofactor.

The protein resides in the cytoplasm. Its subcellular location is the secreted. It localises to the cell surface. It catalyses the reaction (2R)-2-phosphoglycerate = phosphoenolpyruvate + H2O. It participates in carbohydrate degradation; glycolysis; pyruvate from D-glyceraldehyde 3-phosphate: step 4/5. Catalyzes the reversible conversion of 2-phosphoglycerate (2-PG) into phosphoenolpyruvate (PEP). It is essential for the degradation of carbohydrates via glycolysis. This Clostridium tetani (strain Massachusetts / E88) protein is Enolase.